Consider the following 196-residue polypeptide: Potassium-transporting ATPase KdpC subunit (196 aa).

Residues Leu17–Val37 form a helical membrane-spanning segment. The interval Gln73–Leu93 is disordered.

Belongs to the KdpC family. In terms of assembly, the system is composed of three essential subunits: KdpA, KdpB and KdpC.

The protein localises to the cell membrane. Functionally, part of the high-affinity ATP-driven potassium transport (or Kdp) system, which catalyzes the hydrolysis of ATP coupled with the electrogenic transport of potassium into the cytoplasm. This subunit acts as a catalytic chaperone that increases the ATP-binding affinity of the ATP-hydrolyzing subunit KdpB by the formation of a transient KdpB/KdpC/ATP ternary complex. The protein is Potassium-transporting ATPase KdpC subunit of Kineococcus radiotolerans (strain ATCC BAA-149 / DSM 14245 / SRS30216).